A 786-amino-acid chain; its full sequence is Sucrose synthase (786 aa).

The GT-B glycosyltransferase stretch occupies residues 259-736 (MIFSLVVLSP…ALKRVEERYN (478 aa)).

This sequence belongs to the glycosyltransferase 1 family. In terms of assembly, homotetramer.

It catalyses the reaction an NDP-alpha-D-glucose + D-fructose = a ribonucleoside 5'-diphosphate + sucrose + H(+). Its function is as follows. Catalyzes the reversible conversion of sucrose and a nucleotide disphosphate (NDP) into fructose and NDP-glucose; although the reaction is freely reversible in vitro, the physiological reaction seems to be sucrose cleavage. Unlike characterized plant enzymes prefers ADP as a cosubstrate, whereas plants prefer UDP. Its preference for ADP over UDP suggests it may directly link sucrose and glycogen metabolism. This is Sucrose synthase from Denitrovibrio acetiphilus (strain DSM 12809 / NBRC 114555 / N2460).